An 868-amino-acid polypeptide reads, in one-letter code: Translation initiation factor IF-2 (868 aa).

A disordered region spans residues K201–E269. The segment covering R249–G260 has biased composition (basic residues). The tr-type G domain occupies G368–K537. A G1 region spans residues G377–T384. G377–T384 is a binding site for GTP. The interval G402–H406 is G2. The segment at D423–G426 is G3. GTP is bound by residues D423–H427 and N477–D480. Residues N477–D480 are G4. A G5 region spans residues S513–K515.

It belongs to the TRAFAC class translation factor GTPase superfamily. Classic translation factor GTPase family. IF-2 subfamily.

The protein resides in the cytoplasm. In terms of biological role, one of the essential components for the initiation of protein synthesis. Protects formylmethionyl-tRNA from spontaneous hydrolysis and promotes its binding to the 30S ribosomal subunits. Also involved in the hydrolysis of GTP during the formation of the 70S ribosomal complex. The polypeptide is Translation initiation factor IF-2 (Legionella pneumophila (strain Corby)).